The chain runs to 856 residues: FO synthase (856 aa).

Radical SAM core domains follow at residues 84-336 (ISYS…APPN) and 544-785 (VTFV…SHIQ). The tract at residues 85–417 (SYSRKVFIPV…PRVRGHVVAL (333 aa)) is cofG-like. [4Fe-4S] cluster contacts are provided by C98, C102, C105, C558, C562, and C565. The cofH-like stretch occupies residues 521–854 (DGPALEAVAA…RQRTTTYALL (334 aa)).

In the N-terminal section; belongs to the radical SAM superfamily. CofG family. This sequence in the C-terminal section; belongs to the radical SAM superfamily. CofH family. [4Fe-4S] cluster is required as a cofactor.

The enzyme catalyses 5-amino-6-(D-ribitylamino)uracil + L-tyrosine + S-adenosyl-L-methionine = 5-amino-5-(4-hydroxybenzyl)-6-(D-ribitylimino)-5,6-dihydrouracil + 2-iminoacetate + 5'-deoxyadenosine + L-methionine + H(+). The catalysed reaction is 5-amino-5-(4-hydroxybenzyl)-6-(D-ribitylimino)-5,6-dihydrouracil + S-adenosyl-L-methionine = 7,8-didemethyl-8-hydroxy-5-deazariboflavin + 5'-deoxyadenosine + L-methionine + NH4(+) + H(+). It functions in the pathway cofactor biosynthesis; coenzyme F0 biosynthesis. In terms of biological role, catalyzes the radical-mediated synthesis of 7,8-didemethyl-8-hydroxy-5-deazariboflavin (FO) from 5-amino-6-(D-ribitylamino)uracil and L-tyrosine. This Mycobacterium bovis (strain ATCC BAA-935 / AF2122/97) protein is FO synthase (fbiC).